Consider the following 109-residue polypeptide: Flagellar hook-basal body complex protein FliE 2 (109 aa).

Belongs to the FliE family.

The protein localises to the bacterial flagellum basal body. In Bradyrhizobium diazoefficiens (strain JCM 10833 / BCRC 13528 / IAM 13628 / NBRC 14792 / USDA 110), this protein is Flagellar hook-basal body complex protein FliE 2 (fliE2).